Consider the following 137-residue polypeptide: Small ribosomal subunit protein uS12 (137 aa).

Asp-102 carries the 3-methylthioaspartic acid modification.

The protein belongs to the universal ribosomal protein uS12 family. Part of the 30S ribosomal subunit. Contacts proteins S8 and S17. May interact with IF1 in the 30S initiation complex.

Functionally, with S4 and S5 plays an important role in translational accuracy. In terms of biological role, interacts with and stabilizes bases of the 16S rRNA that are involved in tRNA selection in the A site and with the mRNA backbone. Located at the interface of the 30S and 50S subunits, it traverses the body of the 30S subunit contacting proteins on the other side and probably holding the rRNA structure together. The combined cluster of proteins S8, S12 and S17 appears to hold together the shoulder and platform of the 30S subunit. The chain is Small ribosomal subunit protein uS12 from Phytoplasma mali (strain AT).